A 270-amino-acid chain; its full sequence is uncharacterized protein (270 aa).

The first 22 residues, 1-22 (MEYIKKIALYMSVLLLIIFIGG), serve as a signal peptide directing secretion. A lipid anchor (N-palmitoyl cysteine) is attached at cysteine 23. A lipid anchor (S-diacylglycerol cysteine) is attached at cysteine 23.

It belongs to the staphylococcal tandem lipoprotein family.

It localises to the cell membrane. This is an uncharacterized protein from Staphylococcus aureus (strain NCTC 8325 / PS 47).